An 874-amino-acid polypeptide reads, in one-letter code: Cellulose synthase catalytic subunit [UDP-forming] (874 aa).

Transmembrane regions (helical) follow at residues 30 to 50 (SPFS…VFPL), 151 to 171 (ILGV…TQPF), 173 to 193 (PLSQ…VRRM), and 230 to 250 (LVCG…LVLG). The tract at residues 271 to 364 (QWPTVDIFVP…FVAIFDCDHV (94 aa)) is catalytic subdomain A. The active site involves D313. Residues D360 and D362 each contribute to the substrate site. Positions 441–501 (KPLDEIGGIA…GQRIRWARGM (61 aa)) are catalytic subdomain B. The active site involves D457. The next 5 membrane-spanning stretches (helical) occupy residues 525–545 (LNAM…TAPL), 547–567 (FLLL…LFVI), 592–612 (IYET…LINP), 634–654 (VISR…AAGV), and 668–688 (VIVS…AVAV). Residues 694–790 (QVRRAHRVEI…QHIDFVQCTF (97 aa)) form the PilZ domain. The chain crosses the membrane as a helical span at residues 833–853 (SVKVIFRSLTALIAWIVSFIP).

Belongs to the glycosyltransferase 2 family. Requires Mg(2+) as cofactor.

Its subcellular location is the cell inner membrane. The enzyme catalyses [(1-&gt;4)-beta-D-glucosyl](n) + UDP-alpha-D-glucose = [(1-&gt;4)-beta-D-glucosyl](n+1) + UDP + H(+). It participates in glycan metabolism; bacterial cellulose biosynthesis. Its activity is regulated as follows. Activated by bis-(3'-5') cyclic diguanylic acid (c-di-GMP). Functionally, catalytic subunit of cellulose synthase. It polymerizes uridine 5'-diphosphate glucose to cellulose, which is produced as an extracellular component for mechanical and chemical protection at the onset of the stationary phase, when the cells exhibit multicellular behavior (rdar morphotype). Coexpression of cellulose and thin aggregative fimbriae leads to a hydrophobic network with tightly packed cells embedded in a highly inert matrix. This Salmonella typhimurium (strain LT2 / SGSC1412 / ATCC 700720) protein is Cellulose synthase catalytic subunit [UDP-forming] (bcsA).